A 529-amino-acid chain; its full sequence is Basal body-orientation factor 1 (529 aa).

Positions 1–13 (MPSKGKDKKKGKS) are enriched in basic residues. Residues 1–22 (MPSKGKDKKKGKSKGKDTKKLI) are disordered. 2 coiled-coil regions span residues 85 to 201 (LKKQ…EAEK) and 271 to 361 (VKEK…EVER).

Belongs to the BBOF1 family. Interacts with MNS1 and ODF2.

Its subcellular location is the cytoplasm. It localises to the cytoskeleton. The protein resides in the cilium basal body. It is found in the flagellum axoneme. Its function is as follows. Plays an essential role in sperm motility and male fertility by stabilizing the sperm flagellar axonemal structure. May be required for the stability of ODF2 and MANS1 proteins. Dispensable for the assembly and function of motile cilia. This Homo sapiens (Human) protein is Basal body-orientation factor 1.